Reading from the N-terminus, the 223-residue chain is 2-C-methyl-D-erythritol 4-phosphate cytidylyltransferase (223 aa).

Belongs to the IspD/TarI cytidylyltransferase family. IspD subfamily.

It catalyses the reaction 2-C-methyl-D-erythritol 4-phosphate + CTP + H(+) = 4-CDP-2-C-methyl-D-erythritol + diphosphate. The protein operates within isoprenoid biosynthesis; isopentenyl diphosphate biosynthesis via DXP pathway; isopentenyl diphosphate from 1-deoxy-D-xylulose 5-phosphate: step 2/6. Its function is as follows. Catalyzes the formation of 4-diphosphocytidyl-2-C-methyl-D-erythritol from CTP and 2-C-methyl-D-erythritol 4-phosphate (MEP). This chain is 2-C-methyl-D-erythritol 4-phosphate cytidylyltransferase, found in Prochlorococcus marinus (strain MIT 9515).